A 69-amino-acid chain; its full sequence is uncharacterized protein (69 aa).

Helical transmembrane passes span 15 to 35 (LIIG…ICYV) and 36 to 56 (LYII…IPKT).

The protein resides in the cell membrane. This is an uncharacterized protein from Methanocaldococcus jannaschii (strain ATCC 43067 / DSM 2661 / JAL-1 / JCM 10045 / NBRC 100440) (Methanococcus jannaschii).